Consider the following 59-residue polypeptide: MSPLRYQKWLRLNEVRRQMLNEHYDVTTAAYAVGYESYPISVGNIRGCLESHPREILPG.

Positions 1–59 constitute an HTH araC/xylS-type domain; that stretch reads MSPLRYQKWLRLNEVRRQMLNEHYDVTTAAYAVGYESYPISVGNIRGCLESHPREILPG. Residues 26 to 49 constitute a DNA-binding region (H-T-H motif); it reads VTTAAYAVGYESYPISVGNIRGCL.

The protein is Putative HTH-type transcriptional regulator YneL (yneL) of Escherichia coli (strain K12).